We begin with the raw amino-acid sequence, 223 residues long: RNA polymerase sigma-H factor (223 aa).

The Polymerase core binding signature appears at 67 to 80; the sequence is DIVQEGMIGLYKSI. A DNA-binding region (H-T-H motif) is located at residues 187-206; it reads YQEISEELNRHVKSIDNALQ.

This sequence belongs to the sigma-70 factor family.

Sigma factors are initiation factors that promote the attachment of RNA polymerase to specific initiation sites and are then released. This sigma factor is involved in the transition to post-exponential phase in the beginning of sporulation. The polypeptide is RNA polymerase sigma-H factor (sigH) (Bacillus licheniformis).